Here is a 229-residue protein sequence, read N- to C-terminus: E3 ubiquitin-protein ligase RNF114 (229 aa).

Positions 1–23 (MAAAQPESRDGAAQSAKPASETD) are disordered. The RING-type zinc-finger motif lies at 30 to 69 (CPVCLEVFEKPVQVPCGHVFCSACLQECLKPKKPVCGVCR). Cys92 and Cys95 together coordinate Zn(2+). The C2HC RNF-type zinc finger occupies 92-111 (CHGCRKNFILSKIRAHVTSC). At Lys103 the chain carries N6-acetyllysine. Residues His107 and Cys111 each contribute to the Zn(2+) site. At Lys113 the chain carries N6-acetyllysine.

Interacts with XAF1, the interaction increases XAF1 stability and proapoptotic effects, and may regulate IFN signaling. Post-translationally, autoubiquitinated. Polyubiquitinated in the presence of E2 enzymes UBE2D1, UBE2D2 and UBE2D3, but only monoubiquitinated in the presence of UBE2E1.

The protein localises to the cytoplasm. It localises to the nucleus. It catalyses the reaction S-ubiquitinyl-[E2 ubiquitin-conjugating enzyme]-L-cysteine + [acceptor protein]-L-lysine = [E2 ubiquitin-conjugating enzyme]-L-cysteine + N(6)-ubiquitinyl-[acceptor protein]-L-lysine.. It participates in protein modification; protein ubiquitination. Functionally, E3 ubiquitin-protein ligase that promotes the ubiquitination of various substrates. In turn, participates in the regulation of many biological processes including cell cycle, apoptosis, osteoclastogenesis as well as innate or adaptive immunity. Acts as negative regulator of NF-kappa-B-dependent transcription by promoting the ubiquitination and stabilization of the NF-kappa-B inhibitor TNFAIP3. May promote the ubiquitination of TRAF6 as well. Also acts as a negative regulator of T-cell activation. Inhibits cellular dsRNA responses and interferon production by targeting MAVS component for proteasomal degradation. Ubiquitinates the CDK inhibitor CDKN1A leading to its degradationand probably also CDKN1B and CDKN1C. This activity stimulates cell cycle G1-to-S phase transition and suppresses cellular senescence. May play a role in spermatogenesis. The sequence is that of E3 ubiquitin-protein ligase RNF114 (Rnf114) from Mus musculus (Mouse).